We begin with the raw amino-acid sequence, 401 residues long: Elongation factor Tu 2 (401 aa).

Residues 10–209 (KPHVNVGTIG…AVDEYIPTPV (200 aa)) form the tr-type G domain. The segment at 19 to 26 (GHVDHGKT) is G1. Position 19–26 (19–26 (GHVDHGKT)) interacts with GTP. Threonine 26 is a Mg(2+) binding site. The interval 60–64 (GITIA) is G2. Positions 81 to 84 (DCPG) are G3. Residues 81–85 (DCPGH) and 136–139 (NKVD) each bind GTP. Residues 136–139 (NKVD) form a G4 region. The segment at 174-176 (SAL) is G5.

This sequence belongs to the TRAFAC class translation factor GTPase superfamily. Classic translation factor GTPase family. EF-Tu/EF-1A subfamily. In terms of assembly, monomer.

The protein resides in the cytoplasm. The enzyme catalyses GTP + H2O = GDP + phosphate + H(+). In terms of biological role, GTP hydrolase that promotes the GTP-dependent binding of aminoacyl-tRNA to the A-site of ribosomes during protein biosynthesis. The sequence is that of Elongation factor Tu 2 from Roseiflexus sp. (strain RS-1).